Consider the following 539-residue polypeptide: MHNSGGQSGWNLSGEERKPFSNYGRNNQQRRSSGGGGRGSHSQNRAANGNWPDAGSEGGQNGNAFNKFRDPQQELDNHQPNKRGGRRNRGGGGGGGGWGGRRGNRGRDSNRRGGRNNSWQPKDQHVSPGQSNMLYFDNVGDFTEDPPLPRSSPAPSSLRQESLPPVTFAADLTPPPPVSVAPPDVAVTPEEPTVPLINIKKEKEMEHKSKIKQFVKAEPKSPKKKKVNSSRSSSTSGEESEPEPGEMVVNTKAVVVPSPKAKAIKTPVASTPKPKAVKPVSSSDSSTSDSDTDDEQSHPPAKSKKMEKNTEEDVVCMGSQERQFTITDEEESTEPEDDKKARKQKNKGKTVDVCGICDKKGHTSFQCQMICRNCSGSYHGLKNCPNPPNLNIAIQSFVEFAMQQMTAFHCEQGFGFPAGTVTAPVSAKPKKDKKASIKKIKKSSQKRMKVEPKDHDEEDDEEDDDEDEDDSSESDDSESSEEPHPAPVSKQKRKRGTKASVSAAASLPPQVFPFPLLGAPGAPFNSMMYSYRAPFNFSK.

Residues 1–11 (MHNSGGQSGWN) are compositionally biased toward polar residues. Residues 1 to 345 (MHNSGGQSGW…EDDKKARKQK (345 aa)) form a disordered region. Positions 67–79 (KFRDPQQELDNHQ) are enriched in basic and acidic residues. Basic residues predominate over residues 80–89 (PNKRGGRRNR). A compositionally biased stretch (gly residues) spans 90–101 (GGGGGGGGWGGR). Residues 199 to 208 (IKKEKEMEHK) are compositionally biased toward basic and acidic residues. The segment covering 268–289 (VASTPKPKAVKPVSSSDSSTSD) has biased composition (low complexity). Residues Ser288 and Ser290 each carry the phosphoserine modification. Thr292 and Thr327 each carry phosphothreonine. The span at 327 to 336 (TDEEESTEPE) shows a compositional bias: acidic residues. Residue Ser332 is modified to Phosphoserine. A Phosphothreonine modification is found at Thr333. 2 CCHC-type zinc fingers span residues 354–367 (CGIC…SFQC) and 371–386 (CRNC…NCPN). Residues 421–513 (VTAPVSAKPK…AASLPPQVFP (93 aa)) form a disordered region. Residues 428–447 (KPKKDKKASIKKIKKSSQKR) show a composition bias toward basic residues. The span at 456–480 (DEEDDEEDDDEDEDDSSESDDSESS) shows a compositional bias: acidic residues.

May be phosphorylated in vivo by CkIIalpha. mbm and CkIIalpha colocalize to the nucleolus and mbm is phosphorylated in vitro by CkIIalpha. As to expression, shows widespread expression in third instar larval brain with no apparent difference between males and females (at protein level). Detected at low levels in the mushroom body neuropil and is also expressed in many cells of the brain outside the mushroom body (at protein level). Not detected in third instar larval brain cells in anaphase (at protein level).

The protein resides in the nucleus. The protein localises to the nucleolus. Its subcellular location is the cytoplasm. Its function is as follows. Required for small ribosomal subunit biogenesis in neuroblasts. Plays a role in mushroom body development. The sequence is that of Protein mushroom body miniature from Drosophila melanogaster (Fruit fly).